The following is a 572-amino-acid chain: Asparagine--tRNA ligase, cytoplasmic 1 (572 aa).

A2 carries the post-translational modification N-acetylalanine. The segment at residues V53–V131 is a DNA-binding region (OB). The WHEP-TRS domain maps to D236–P292.

This sequence belongs to the class-II aminoacyl-tRNA synthetase family.

The protein resides in the cytoplasm. Its subcellular location is the cytosol. It carries out the reaction tRNA(Asn) + L-asparagine + ATP = L-asparaginyl-tRNA(Asn) + AMP + diphosphate + H(+). This Arabidopsis thaliana (Mouse-ear cress) protein is Asparagine--tRNA ligase, cytoplasmic 1.